The sequence spans 1514 residues: Mitogen-activated protein kinase-binding protein 1 (1514 aa).

N-acetylalanine is present on alanine 2. 12 WD repeats span residues 88-129 (SSRK…QVAE), 132-173 (EHKY…VVAS), 175-213 (KVSS…TSKV), 276-315 (DSFT…FLST), 342-381 (ARYP…KVGK), 387-436 (YHSS…VHGS), 477-516 (DPRV…EMLK), 519-561 (AHDS…SLQQ), 565-606 (EHSS…DGVQ), 614-653 (VRKT…QKKL), 659-698 (GEDG…CVAT), and 701-740 (GHSE…TISM). Disordered regions lie at residues 748–804 (RQRQ…PALP), 880–925 (PSLQ…SQPC), 951–1256 (EDGI…SSMA), and 1299–1336 (DIPK…GLGK). Over residues 789–800 (KEGEDEGTEEEL) the composition is skewed to acidic residues. Composition is skewed to polar residues over residues 905 to 925 (LETS…SQPC) and 961 to 971 (DNPTMDTSEFQ). Over residues 996 to 1011 (DSACSVDYSSSCLSSP) the composition is skewed to low complexity. The span at 1032–1048 (DLEEPAEGDEEEEEEEG) shows a compositional bias: acidic residues. The span at 1113 to 1126 (PSPSSSSLALMSRP) shows a compositional bias: low complexity. 2 stretches are compositionally biased toward polar residues: residues 1188–1200 (SPFS…QSVH) and 1245–1256 (HSYQNPTTSSMA). Residue serine 1198 is modified to Phosphoserine.

In terms of assembly, can form homodimers (via C-terminus). Interacts (via C-terminus) with WDR62 (via C-terminus). Interacts with MAPK9. Interacts (via N-terminus) with NOD2; the interaction is enhanced in presence of muramyl dipeptide (MDP). Interacts with MAPK10. In terms of tissue distribution, expressed in intestinal mucosa, where it is detected in epithelial cells, endothelial cells, smooth muscle cells and immune cells, such as lymphocytes. Expressed in kidney.

It localises to the cytoplasm. Its subcellular location is the nucleus. The protein resides in the cytoskeleton. It is found in the spindle pole. In terms of biological role, negative regulator of NOD2 function. It down-regulates NOD2-induced processes such as activation of NF-kappa-B signaling, IL8 secretion and antibacterial response. Involved in JNK signaling pathway. The chain is Mitogen-activated protein kinase-binding protein 1 (MAPKBP1) from Homo sapiens (Human).